The chain runs to 60 residues: UPF0291 protein Nther_1806 (60 aa).

This sequence belongs to the UPF0291 family.

The protein localises to the cytoplasm. This chain is UPF0291 protein Nther_1806, found in Natranaerobius thermophilus (strain ATCC BAA-1301 / DSM 18059 / JW/NM-WN-LF).